A 468-amino-acid polypeptide reads, in one-letter code: Ammonium transporter Amt2 (468 aa).

The next 12 membrane-spanning stretches (helical) occupy residues 1–21 (MVGR…TAGA), 39–59 (FVWA…FAML), 77–97 (LMDF…LMMG), 123–143 (LWFF…GSIA), 156–176 (AVVS…GGWL), 194–214 (FAGS…AVML), 236–256 (LAFA…FNAG), 268–288 (IIAS…MAIT), 297–317 (VGMT…PCAW), 321–341 (WSSV…YWWL), 350–370 (VGAI…LGIF), and 400–420 (LISA…LFWI).

Belongs to the ammonia transporter channel (TC 1.A.11.2) family. As to quaternary structure, homotrimer.

Its subcellular location is the cell membrane. In terms of biological role, involved in the uptake of ammonium/ammonia (NH(4)(+)/NH(3)). Transport is electrogenic. This is Ammonium transporter Amt2 from Archaeoglobus fulgidus (strain ATCC 49558 / DSM 4304 / JCM 9628 / NBRC 100126 / VC-16).